We begin with the raw amino-acid sequence, 561 residues long: NADH-quinone oxidoreductase subunit C/D (561 aa).

The interval 1 to 152 (MLEKFSSKFN…YQVLYESDDL (152 aa)) is NADH dehydrogenase I subunit C. Residues 176-561 (KYTFLNIGPS…LNIIAGELDR (386 aa)) are NADH dehydrogenase I subunit D.

This sequence in the N-terminal section; belongs to the complex I 30 kDa subunit family. It in the C-terminal section; belongs to the complex I 49 kDa subunit family. As to quaternary structure, NDH-1 is composed of 13 different subunits. Subunits NuoB, CD, E, F, and G constitute the peripheral sector of the complex.

The protein localises to the cell inner membrane. It catalyses the reaction a quinone + NADH + 5 H(+)(in) = a quinol + NAD(+) + 4 H(+)(out). Its function is as follows. NDH-1 shuttles electrons from NADH, via FMN and iron-sulfur (Fe-S) centers, to quinones in the respiratory chain. The immediate electron acceptor for the enzyme in this species is believed to be ubiquinone. Couples the redox reaction to proton translocation (for every two electrons transferred, four hydrogen ions are translocated across the cytoplasmic membrane), and thus conserves the redox energy in a proton gradient. The chain is NADH-quinone oxidoreductase subunit C/D from Campylobacter fetus subsp. fetus (strain 82-40).